The following is a 360-amino-acid chain: Lipid-A-disaccharide synthase (360 aa).

It belongs to the LpxB family.

It catalyses the reaction a lipid X + a UDP-2-N,3-O-bis[(3R)-3-hydroxyacyl]-alpha-D-glucosamine = a lipid A disaccharide + UDP + H(+). It functions in the pathway bacterial outer membrane biogenesis; LPS lipid A biosynthesis. Its function is as follows. Condensation of UDP-2,3-diacylglucosamine and 2,3-diacylglucosamine-1-phosphate to form lipid A disaccharide, a precursor of lipid A, a phosphorylated glycolipid that anchors the lipopolysaccharide to the outer membrane of the cell. In Helicobacter pylori (strain G27), this protein is Lipid-A-disaccharide synthase.